Reading from the N-terminus, the 490-residue chain is GTPase Der (490 aa).

2 consecutive EngA-type G domains span residues 3 to 166 (PVVA…AEAM) and 200 to 373 (IKLA…DSAT). GTP is bound by residues 9–16 (GRPNVGKS), 56–60 (DTGGI), 118–121 (NKVD), 206–213 (GKPNVGKS), 253–257 (DTAGV), and 318–321 (NKWD). Positions 374-458 (RRVSTSMLTR…PIQLRFQEGG (85 aa)) constitute a KH-like domain. Positions 470 to 490 (TVSQERRRKRMVGHIRDKNKD) are disordered.

Belongs to the TRAFAC class TrmE-Era-EngA-EngB-Septin-like GTPase superfamily. EngA (Der) GTPase family. Associates with the 50S ribosomal subunit.

In terms of biological role, GTPase that plays an essential role in the late steps of ribosome biogenesis. This chain is GTPase Der, found in Shewanella pealeana (strain ATCC 700345 / ANG-SQ1).